The primary structure comprises 509 residues: MLLPWLILIPFIGGFLCWQTERFGVKVPRWIALITMGLTLALSLQLWLQGGYSLTQSAGIPQWQSEFDMPWIPRFGISIHLAIDGLSLLMVVLTGLLGVLAVLCSWKEIEKYQGFFHLNLMWILGGVIGVFLAIDMFLFFFFWEMMLVPMYFLIALWGHKASDGKTRITAATKFFIYTQASGLVMLIAILALVFVHYNATGVWTFNYEELLNTPMSSGVEYLLMLGFFIAFAVKMPVVPLHGWLPDAHSQAPTAGSVDLAGILLKTAAYGLLRFSLPLFPNASAEFAPIAMWLGVIGIFYGAWMAFAQTDIKRLIAYTSVSHMGFVLIAIYTGSQLAYQGAVIQMIAHGLSAAGLFILCGQLYERIHTRDMRMMGGLWSKMKWLPALSLFFAVATLGMPGTGNFVGEFMILFGSFQVVPVITVISTFGLVFASVYSLAMLHRAYFGKAKSQIASQELPGMSLRELFMILLLVVLLVLLGFYPQPILDTSHSAIGNIQQWFVNSVTTTRP.

The chain crosses the membrane as a helical span at residues 1–21 (MLLPWLILIPFIGGFLCWQTE). The Cytoplasmic segment spans residues 22 to 29 (RFGVKVPR). Residues 30 to 50 (WIALITMGLTLALSLQLWLQG) form a helical membrane-spanning segment. The Periplasmic portion of the chain corresponds to 51 to 82 (GYSLTQSAGIPQWQSEFDMPWIPRFGISIHLA). A helical membrane pass occupies residues 83–103 (IDGLSLLMVVLTGLLGVLAVL). The Cytoplasmic segment spans residues 104–121 (CSWKEIEKYQGFFHLNLM). The chain crosses the membrane as a helical span at residues 122-142 (WILGGVIGVFLAIDMFLFFFF). The Periplasmic segment spans residues 143–173 (WEMMLVPMYFLIALWGHKASDGKTRITAATK). Residues 174 to 194 (FFIYTQASGLVMLIAILALVF) form a helical membrane-spanning segment. Topologically, residues 195 to 221 (VHYNATGVWTFNYEELLNTPMSSGVEY) are cytoplasmic. Residues 222 to 242 (LLMLGFFIAFAVKMPVVPLHG) traverse the membrane as a helical segment. The Periplasmic portion of the chain corresponds to 243 to 258 (WLPDAHSQAPTAGSVD). The helical transmembrane segment at 259–279 (LAGILLKTAAYGLLRFSLPLF) threads the bilayer. At 280–285 (PNASAE) the chain is on the cytoplasmic side. Residues 286–306 (FAPIAMWLGVIGIFYGAWMAF) form a helical membrane-spanning segment. Over 307 to 313 (AQTDIKR) the chain is Periplasmic. Residues 314–334 (LIAYTSVSHMGFVLIAIYTGS) form a helical membrane-spanning segment. Topologically, residues 335–339 (QLAYQ) are cytoplasmic. Residues 340 to 360 (GAVIQMIAHGLSAAGLFILCG) traverse the membrane as a helical segment. Residues 361–382 (QLYERIHTRDMRMMGGLWSKMK) are Periplasmic-facing. A run of 2 helical transmembrane segments spans residues 383–403 (WLPALSLFFAVATLGMPGTGN) and 404–424 (FVGEFMILFGSFQVVPVITVI). Residue Ser425 is a topological domain, periplasmic. Residues 426–446 (TFGLVFASVYSLAMLHRAYFG) traverse the membrane as a helical segment. At 447–464 (KAKSQIASQELPGMSLRE) the chain is on the cytoplasmic side. A helical transmembrane segment spans residues 465–485 (LFMILLLVVLLVLLGFYPQPI). Topologically, residues 486–509 (LDTSHSAIGNIQQWFVNSVTTTRP) are periplasmic.

Belongs to the complex I subunit 4 family. In terms of assembly, composed of 13 different subunits. Subunits NuoA, H, J, K, L, M, N constitute the membrane sector of the complex.

The protein localises to the cell inner membrane. It catalyses the reaction a quinone + NADH + 5 H(+)(in) = a quinol + NAD(+) + 4 H(+)(out). NDH-1 shuttles electrons from NADH, via FMN and iron-sulfur (Fe-S) centers, to quinones in the respiratory chain. The immediate electron acceptor for the enzyme in this species is believed to be ubiquinone. Couples the redox reaction to proton translocation (for every two electrons transferred, four hydrogen ions are translocated across the cytoplasmic membrane), and thus conserves the redox energy in a proton gradient. The protein is NADH-quinone oxidoreductase subunit M (nuoM) of Escherichia coli O157:H7.